A 224-amino-acid chain; its full sequence is 7-cyano-7-deazaguanine synthase (224 aa).

An ATP-binding site is contributed by 12-22 (LSGGLDSSTVT). Zn(2+) contacts are provided by C193, C201, C204, and C207.

This sequence belongs to the QueC family. Zn(2+) serves as cofactor.

It catalyses the reaction 7-carboxy-7-deazaguanine + NH4(+) + ATP = 7-cyano-7-deazaguanine + ADP + phosphate + H2O + H(+). It participates in purine metabolism; 7-cyano-7-deazaguanine biosynthesis. Functionally, catalyzes the ATP-dependent conversion of 7-carboxy-7-deazaguanine (CDG) to 7-cyano-7-deazaguanine (preQ(0)). The sequence is that of 7-cyano-7-deazaguanine synthase from Prochlorococcus marinus (strain MIT 9515).